The following is a 620-amino-acid chain: Pentatricopeptide repeat-containing protein At5g66520 (620 aa).

PPR repeat units lie at residues 79–113 (DTFL…SAPH), 114–148 (NAYT…GYEN), 149–179 (DVYA…IPEP), 180–210 (DDVS…MAEK), 211–245 (NAIS…DVEP), 246–280 (DNVS…RIRM), 281–311 (DSVL…IKKK), 312–346 (SVQA…GIKP), 347–382 (NVIT…NLKP), and 383–413 (TIEH…MPLK). Residues 418–493 (IWGALLKACR…VPGCSTISLE (76 aa)) form a type E motif region. The segment at 494 to 524 (GTTHEFLAGDRSHPEIEKIQSKWRIMRRKLE) is type E(+) motif. The segment at 525–620 (ENGYVPELEE…DGKCSCGDYW (96 aa)) is type DYW motif.

Belongs to the PPR family. PCMP-H subfamily.

The protein is Pentatricopeptide repeat-containing protein At5g66520 (PCMP-H61) of Arabidopsis thaliana (Mouse-ear cress).